The chain runs to 76 residues: Large ribosomal subunit protein bL31 (76 aa).

Belongs to the bacterial ribosomal protein bL31 family. Type A subfamily. Part of the 50S ribosomal subunit.

Its function is as follows. Binds the 23S rRNA. This is Large ribosomal subunit protein bL31 from Gluconacetobacter diazotrophicus (strain ATCC 49037 / DSM 5601 / CCUG 37298 / CIP 103539 / LMG 7603 / PAl5).